The sequence spans 457 residues: Peptidyl-prolyl cis-trans isomerase FKBP5 (457 aa).

N-acetylmethionine is present on Met1. The segment at 1–26 is disordered; sequence MTTDEGAKNSRGNPAATVAEQGEDVT. The residue at position 28 (Lys28) is an N6-acetyllysine. PPIase FKBP-type domains follow at residues 50-138 and 165-251; these read GDRV…LDFK and GARV…KSFE. TPR repeat units follow at residues 268–301, 317–350, and 351–384; these read AAIV…LEME, LAAF…DSAN, and EKGL…NPQN. The disordered stretch occupies residues 421 to 457; that stretch reads AKEEANKAMSKKTSEGVTNEKLTASHAVEEEKPEGHV. Ser445 is modified (phosphoserine). Residues 447-457 show a composition bias toward basic and acidic residues; that stretch reads AVEEEKPEGHV.

Part of a heteromultimeric cytoplasmic complex with HSP90AA1, HSPA1A/HSPA1B and steroid receptors. Upon ligand binding dissociates from the complex and FKBP4 takes its place. Interacts with functionally mature heterooligomeric progesterone receptor complexes along with HSP90 and TEBP. Interacts with NR3C1. Interacts with Akt/AKT1 and PHLPP1; enhancing dephosphorylation and subsequent activation of Akt/AKT1. Interacts with IFI44L; this interaction modulates the kinase activity of IKBKB and IKBKE. Interacts with IKBKB and IKBKE. Post-translationally, acetylation impairs ability to promote interaction between Akt/AKT1 and PHLPP1. Deacetylation by SIRT7 promotes interaction between Akt/AKT1 and PHLPP1, leading to suppress Akt/AKT1 activation. In terms of processing, ubiquitinated, leading to degradation in a proteasome-dependent manner. Deubiquitinated by USP49, leading to stabilization.

The protein resides in the cytoplasm. Its subcellular location is the nucleus. The catalysed reaction is [protein]-peptidylproline (omega=180) = [protein]-peptidylproline (omega=0). Its activity is regulated as follows. Inhibited by both FK506 and rapamycin. Its function is as follows. Immunophilin protein with PPIase and co-chaperone activities. Component of unligated steroid receptors heterocomplexes through interaction with heat-shock protein 90 (HSP90). Plays a role in the intracellular trafficking of heterooligomeric forms of steroid hormone receptors maintaining the complex into the cytoplasm when unliganded. Acts as a regulator of Akt/AKT1 activity by promoting the interaction between Akt/AKT1 and PHLPP1, thereby enhancing dephosphorylation and subsequent activation of Akt/AKT1. Interacts with IKBKE and IKBKB which facilitates IKK complex assembly leading to increased IKBKE and IKBKB kinase activity, NF-kappaB activation, and IFN production. The protein is Peptidyl-prolyl cis-trans isomerase FKBP5 (FKBP5) of Saimiri boliviensis boliviensis (Bolivian squirrel monkey).